Here is a 352-residue protein sequence, read N- to C-terminus: Isopentenyl-diphosphate delta-isomerase (352 aa).

Residue 6-7 (RK) participates in substrate binding. FMN is bound by residues 63–65 (AMT), serine 93, and asparagine 122. 93 to 95 (SQR) contributes to the substrate binding site. Glutamine 160 provides a ligand contact to substrate. Glutamate 161 provides a ligand contact to Mg(2+). FMN is bound by residues lysine 192, threonine 221, 271-273 (GIR), and 292-293 (SQ).

It belongs to the IPP isomerase type 2 family. In terms of assembly, homooctamer. Dimer of tetramers. Requires FMN as cofactor. It depends on NADPH as a cofactor. The cofactor is Mg(2+).

The protein resides in the cytoplasm. It carries out the reaction isopentenyl diphosphate = dimethylallyl diphosphate. Involved in the biosynthesis of isoprenoids. Catalyzes the 1,3-allylic rearrangement of the homoallylic substrate isopentenyl (IPP) to its allylic isomer, dimethylallyl diphosphate (DMAPP). The chain is Isopentenyl-diphosphate delta-isomerase from Pyrobaculum arsenaticum (strain DSM 13514 / JCM 11321 / PZ6).